The following is a 295-amino-acid chain: uncharacterized protein (295 aa).

Belongs to the ROK (NagC/XylR) family.

This is an uncharacterized protein from Clostridium perfringens (strain 13 / Type A).